We begin with the raw amino-acid sequence, 545 residues long: Glucose-6-phosphate isomerase (545 aa).

Residue Glu-351 is the Proton donor of the active site. Residues His-382 and Lys-510 contribute to the active site.

Belongs to the GPI family.

Its subcellular location is the cytoplasm. It catalyses the reaction alpha-D-glucose 6-phosphate = beta-D-fructose 6-phosphate. It functions in the pathway carbohydrate biosynthesis; gluconeogenesis. It participates in carbohydrate degradation; glycolysis; D-glyceraldehyde 3-phosphate and glycerone phosphate from D-glucose: step 2/4. Functionally, catalyzes the reversible isomerization of glucose-6-phosphate to fructose-6-phosphate. This chain is Glucose-6-phosphate isomerase, found in Helicobacter pylori (strain J99 / ATCC 700824) (Campylobacter pylori J99).